A 166-amino-acid chain; its full sequence is Phosphopantetheine adenylyltransferase (166 aa).

S9 is a binding site for substrate. Residues 9–10 and H17 contribute to the ATP site; that span reads SF. Substrate is bound by residues K41, T74, and R88. ATP is bound by residues 89 to 91, E99, and 124 to 130; these read GLR and DSFISSS.

This sequence belongs to the bacterial CoaD family. As to quaternary structure, homohexamer. Mg(2+) serves as cofactor.

Its subcellular location is the cytoplasm. The catalysed reaction is (R)-4'-phosphopantetheine + ATP + H(+) = 3'-dephospho-CoA + diphosphate. The protein operates within cofactor biosynthesis; coenzyme A biosynthesis; CoA from (R)-pantothenate: step 4/5. Its function is as follows. Reversibly transfers an adenylyl group from ATP to 4'-phosphopantetheine, yielding dephospho-CoA (dPCoA) and pyrophosphate. The protein is Phosphopantetheine adenylyltransferase of Lactobacillus gasseri (strain ATCC 33323 / DSM 20243 / BCRC 14619 / CIP 102991 / JCM 1131 / KCTC 3163 / NCIMB 11718 / NCTC 13722 / AM63).